The chain runs to 398 residues: Probable purine permease 17 (398 aa).

Positions 1–26 (MEMSKASKQTTRHEESEHVQNPEPDQ) are disordered. The span at 11–20 (TRHEESEHVQ) shows a compositional bias: basic and acidic residues. A Phosphoserine modification is found at serine 29. The next 10 helical transmembrane spans lie at 43–63 (ISVS…MLLL), 88–108 (WTQA…FFIF), 127–147 (LFFL…LFAL), 155–175 (GIFS…TAII), 183–203 (WIII…PDFG), 219–239 (WLAF…QLGF), 258–278 (VLEM…VGLF), 301–321 (VLSL…MIGL), 332–352 (VVHM…FDFM), and 355–375 (VFSW…GSYF).

It belongs to the purine permeases (TC 2.A.7.14) family.

It localises to the membrane. The protein is Probable purine permease 17 (PUP17) of Arabidopsis thaliana (Mouse-ear cress).